Here is a 127-residue protein sequence, read N- to C-terminus: Large ribosomal subunit protein bL12 (127 aa).

A disordered region spans residues 98-127; sequence PKPIKEGAPKAEAESLKSKLEEAGAEVELK.

This sequence belongs to the bacterial ribosomal protein bL12 family. Homodimer. Part of the ribosomal stalk of the 50S ribosomal subunit. Forms a multimeric L10(L12)X complex, where L10 forms an elongated spine to which 2 to 4 L12 dimers bind in a sequential fashion. Binds GTP-bound translation factors.

Forms part of the ribosomal stalk which helps the ribosome interact with GTP-bound translation factors. Is thus essential for accurate translation. The polypeptide is Large ribosomal subunit protein bL12 (Amoebophilus asiaticus (strain 5a2)).